The chain runs to 589 residues: Aspartate--tRNA ligase (589 aa).

Residue Glu-176 coordinates L-aspartate. Residues 200-203 are aspartate; sequence QLFK. Residue Arg-222 participates in L-aspartate binding. ATP is bound by residues 222-224 and Gln-231; that span reads RDE. Residue His-449 participates in L-aspartate binding. An ATP-binding site is contributed by Glu-483. L-aspartate is bound at residue Arg-490. ATP is bound at residue 535–538; the sequence is GLDR.

Belongs to the class-II aminoacyl-tRNA synthetase family. Type 1 subfamily. Homodimer.

The protein resides in the cytoplasm. It carries out the reaction tRNA(Asp) + L-aspartate + ATP = L-aspartyl-tRNA(Asp) + AMP + diphosphate. Its function is as follows. Catalyzes the attachment of L-aspartate to tRNA(Asp) in a two-step reaction: L-aspartate is first activated by ATP to form Asp-AMP and then transferred to the acceptor end of tRNA(Asp). This is Aspartate--tRNA ligase from Enterococcus faecalis (strain ATCC 700802 / V583).